A 247-amino-acid chain; its full sequence is Probable transcriptional regulatory protein Swit_2142 (247 aa).

A compositionally biased stretch (basic residues) spans 1 to 14; it reads MAGHSKFKNIMHRK. A disordered region spans residues 1-21; sequence MAGHSKFKNIMHRKGAQDKKR.

The protein belongs to the TACO1 family.

It is found in the cytoplasm. The polypeptide is Probable transcriptional regulatory protein Swit_2142 (Rhizorhabdus wittichii (strain DSM 6014 / CCUG 31198 / JCM 15750 / NBRC 105917 / EY 4224 / RW1) (Sphingomonas wittichii)).